A 345-amino-acid chain; its full sequence is Gibberellin receptor GID1A (345 aa).

A2 bears the N-acetylalanine mark. The Involved in the stabilization of the negatively charged intermediate by the formation of the oxyanion hole signature appears at H113–G115. Residues G115–S116, Y127, and S191 contribute to the gibberellin A4 site. 4 residues coordinate gibberellin A3: S116, Y127, S191, and F238. S191 is a catalytic residue. D289 is an active-site residue. Gibberellin A4 is bound at residue G320. G320 is a binding site for gibberellin A3.

The protein belongs to the 'GDXG' lipolytic enzyme family. As to quaternary structure, interacts (via N-terminus) with the DELLA proteins GAI, RGA, RGL1, RGL2 and RGL3 (via N-terminus) in a GA-dependent manner. Widely expressed.

It localises to the nucleus. Functions as a soluble gibberellin (GA) receptor. GA is an essential hormone that regulates growth and development in plants. Binds with high affinity the biologically active gibberellin GA4, but has no affinity for the biologically inactive GAs. In response to GA, interacts with specific DELLA proteins, known as repressors of GA-induced growth, and targets them for degradation via proteasome. Seems to be required for GA signaling that controls root growth, seed germination, stem elongation and flower development. Partially redundant with GID1B and GID1C. In Arabidopsis thaliana (Mouse-ear cress), this protein is Gibberellin receptor GID1A (GID1A).